The primary structure comprises 418 residues: L-rhamnose isomerase (418 aa).

His-262, Asp-294, and Asp-296 together coordinate Mn(2+).

The protein belongs to the rhamnose isomerase family. As to quaternary structure, homotetramer. The cofactor is Mn(2+).

It localises to the cytoplasm. The catalysed reaction is L-rhamnopyranose = L-rhamnulose. Its pathway is carbohydrate degradation; L-rhamnose degradation; glycerone phosphate from L-rhamnose: step 1/3. Catalyzes the interconversion of L-rhamnose and L-rhamnulose. In Cronobacter sakazakii (strain ATCC BAA-894) (Enterobacter sakazakii), this protein is L-rhamnose isomerase.